Here is a 66-residue protein sequence, read N- to C-terminus: Large ribosomal subunit protein uL29 (66 aa).

It belongs to the universal ribosomal protein uL29 family.

The polypeptide is Large ribosomal subunit protein uL29 (Rhizobium rhizogenes (strain K84 / ATCC BAA-868) (Agrobacterium radiobacter)).